A 58-amino-acid chain; its full sequence is Alpha-conotoxin AuIB (58 aa).

The signal sequence occupies residues Met1–Ser16. Residues Phe17 to Lys39 constitute a propeptide that is removed on maturation. Cystine bridges form between Cys41/Cys47 and Cys42/Cys54. Cysteine amide is present on Cys54.

In terms of tissue distribution, expressed by the venom duct.

The protein localises to the secreted. Alpha-conotoxins act on postsynaptic membranes, they bind to the nicotinic acetylcholine receptors (nAChR) and thus inhibit them. This toxin blocks mammalian nAChR alpha-3-beta-4/CHRNA3-CHRNB4 subunits. Also exhibits inhibition of D.melanogaster alpha-7/CHRNA7 nAChRs. This is Alpha-conotoxin AuIB from Conus aulicus (Princely cone).